Reading from the N-terminus, the 1057-residue chain is Exportin-1 (1057 aa).

Positions 36-102 constitute an Importin N-terminal domain; that stretch reads AQMVLGKFQE…KNYIVSLIIR (67 aa). HEAT repeat units lie at residues 239-275, 281-321, 462-501, 506-544, 551-588, 596-633, 739-776, 781-818, 855-892, 902-925, and 926-965; these read AEPS…LNLG, AVFI…FIHT, NTQH…AQNK, RFLV…QYPR, KFLK…QCKR, EESQ…YMIA, KETL…DYRT, TRDP…TTLS, QQFK…NVSK, KTYL…KSGF, and ALEC…YVKE.

This sequence belongs to the exportin family. In terms of assembly, component of a nuclear export receptor complex.

The protein resides in the nucleus. The protein localises to the cytoplasm. It is found in the perinuclear region. In terms of biological role, mediates the nuclear export of cellular proteins (cargos) bearing a leucine-rich nuclear export signal (NES). In Dictyostelium discoideum (Social amoeba), this protein is Exportin-1 (xpo1).